The sequence spans 609 residues: Pentatricopeptide repeat-containing protein At1g03540 (609 aa).

PPR repeat units follow at residues 25–59 (SAPTKQSRILELCKLGQLTEAIRILNSTHSSEIPA), 60–94 (TPKLYASLLQTCNKVFSFIHGIQFHAHVVKSGLET), 95–126 (DRNVGNSLLSLYFKLGPGMRETRRVFDGRFVK), 127–161 (DAISWTSMMSGYVTGKEHVKALEVFVEMVSFGLDA), 162–196 (NEFTLSSAVKACSELGEVRLGRCFHGVVITHGFEW), 197–227 (NHFISSTLAYLYGVNREPVDARRVFDEMPEP), 228–263 (DVICWTAVLSAFSKNDLYEEALGLFYAMHRGKGLVP), 264–298 (DGSTFGTVLTACGNLRRLKQGKEIHGKLITNGIGS), 299–329 (NVVVESSLLDMYGKCGSVREARQVFNGMSKK), 330–364 (NSVSWSALLGGYCQNGEHEKAIEIFREMEEKDLYC), 396–426 (NVIVESALIDLYGKSGCIDSASRVYSKMSIR), 427–461 (NMITWNAMLSALAQNGRGEEAVSFFNDMVKKGIKP), 462–497 (DYISFIAILTACGHTGMVDEGRNYFVLMAKSYGIKP), and 498–532 (GTEHYSCMIDLLGRAGLFEEAENLLERAECRNDAS). Positions 533 to 609 (LWGVLLGPCA…TVGQSWIDAH (77 aa)) are type E motif.

The protein belongs to the PPR family. PCMP-E subfamily.

The chain is Pentatricopeptide repeat-containing protein At1g03540 (PCMP-E4) from Arabidopsis thaliana (Mouse-ear cress).